The sequence spans 421 residues: Tol-Pal system protein TolA (421 aa).

Topologically, residues 1–13 (MSKATEQNDKLKR) are cytoplasmic. The helical transmembrane segment at 14–34 (AIIISAVLHVILFAALIWSSF) threads the bilayer. Over 35 to 421 (DENIEASAGG…FKNAPLDFKP (387 aa)) the chain is Periplasmic. Residues 48-310 (SSIDAVMVDS…LSSGKNAPKT (263 aa)) are domain II (alpha-helical). The segment at 65–266 (KRMQSQESSA…KAAADKKAAA (202 aa)) is disordered. Composition is skewed to basic and acidic residues over residues 73 to 175 (SAKR…EAEA) and 206 to 266 (EARK…KAAA). 13 consecutive repeat copies span residues 224–229 (EKKAAA), 230–234 (EKAAA), 235–240 (DKKAAA), 241–245 (EKAAA), 246–250 (DKKAA), 251–255 (EKAAA), 256–260 (EKAAA), 261–266 (DKKAAA), 267–271 (EKAAA), 272–277 (DKKAAA), 278–282 (AKAAA), 283–287 (EKAAA), and 288–292 (AKAAA). The 13 X tandem repeats of [EDA]-K(1,2)-A(2,4) stretch occupies residues 224-292 (EKKAAAEKAA…EKAAAAKAAA (69 aa)). Positions 300–336 (ELSSGKNAPKTGGGAKGNNASPAGSGNTKNNGASGAD) are disordered. The tract at residues 311–421 (GGGAKGNNAS…FKNAPLDFKP (111 aa)) is domain III (functional). Residues 317–332 (NNASPAGSGNTKNNGA) are compositionally biased toward polar residues. Cys-363 and Cys-388 are oxidised to a cystine.

It belongs to the TolA family. The Tol-Pal system is composed of five core proteins: the inner membrane proteins TolA, TolQ and TolR, the periplasmic protein TolB and the outer membrane protein Pal. They form a network linking the inner and outer membranes and the peptidoglycan layer. TolA interacts with TolQ and TolR via its N-terminal domain. Interacts with CpoB, and with the trimeric porins OmpC, OmpF, PhoE and LamB via its central domain. Interacts with TolB via its C-terminal domain. Also interacts with Pal via its C-terminal domain. This interaction is proton motive force dependent and requires TolQ and TolR.

It is found in the cell inner membrane. In terms of biological role, part of the Tol-Pal system, which plays a role in outer membrane invagination during cell division and is important for maintaining outer membrane integrity. The Tol-Pal system is also required for polar localization of chemoreceptors clusters. The system also appears to be required for the activity of several outer membrane-localized enzymes with cell wall remodeling activity. Is involved in the uptake of group A colicins (colicins A, E1, E2, E3, and K) and in the uptake of filamentous phage DNA. The chain is Tol-Pal system protein TolA from Escherichia coli (strain K12).